A 203-amino-acid polypeptide reads, in one-letter code: A-type ATP synthase subunit E (203 aa).

It belongs to the V-ATPase E subunit family. In terms of assembly, has multiple subunits with at least A(3), B(3), C, D, E, F, H, I and proteolipid K(x).

The protein localises to the cell membrane. In terms of biological role, component of the A-type ATP synthase that produces ATP from ADP in the presence of a proton gradient across the membrane. The chain is A-type ATP synthase subunit E from Methanococcus aeolicus (strain ATCC BAA-1280 / DSM 17508 / OCM 812 / Nankai-3).